A 295-amino-acid polypeptide reads, in one-letter code: 33 kDa chaperonin (295 aa).

Intrachain disulfides connect Cys236-Cys238 and Cys269-Cys272.

It belongs to the HSP33 family. Under oxidizing conditions two disulfide bonds are formed involving the reactive cysteines. Under reducing conditions zinc is bound to the reactive cysteines and the protein is inactive.

Its subcellular location is the cytoplasm. Redox regulated molecular chaperone. Protects both thermally unfolding and oxidatively damaged proteins from irreversible aggregation. Plays an important role in the bacterial defense system toward oxidative stress. The chain is 33 kDa chaperonin from Geobacter sp. (strain M21).